A 499-amino-acid chain; its full sequence is Aspartyl/glutamyl-tRNA(Asn/Gln) amidotransferase subunit B (499 aa).

Belongs to the GatB/GatE family. GatB subfamily. Heterotrimer of A, B and C subunits.

The enzyme catalyses L-glutamyl-tRNA(Gln) + L-glutamine + ATP + H2O = L-glutaminyl-tRNA(Gln) + L-glutamate + ADP + phosphate + H(+). It carries out the reaction L-aspartyl-tRNA(Asn) + L-glutamine + ATP + H2O = L-asparaginyl-tRNA(Asn) + L-glutamate + ADP + phosphate + 2 H(+). Functionally, allows the formation of correctly charged Asn-tRNA(Asn) or Gln-tRNA(Gln) through the transamidation of misacylated Asp-tRNA(Asn) or Glu-tRNA(Gln) in organisms which lack either or both of asparaginyl-tRNA or glutaminyl-tRNA synthetases. The reaction takes place in the presence of glutamine and ATP through an activated phospho-Asp-tRNA(Asn) or phospho-Glu-tRNA(Gln). The polypeptide is Aspartyl/glutamyl-tRNA(Asn/Gln) amidotransferase subunit B (Bifidobacterium animalis subsp. lactis (strain AD011)).